The primary structure comprises 304 residues: Galactofuranosyltransferase GlfT1 (304 aa).

Belongs to the glycosyltransferase 2 family. As to quaternary structure, is probably part of an AG biosynthetic complex.

The protein localises to the cell membrane. Its subcellular location is the secreted. It is found in the cell wall. The enzyme catalyses alpha-L-rhamnosyl-(1-&gt;3)-N-acetyl-alpha-D-glucosaminyl-diphospho-trans,octa-cis-decaprenol + 2 UDP-alpha-D-galactofuranose = beta-D-galactofuranosyl-(1-&gt;5)-beta-D-galactofuranosyl-(1-&gt;4)-alpha-L-rhamnosyl-(1-&gt;3)-N-acetyl-alpha-D-glucosaminyl-diphospho-trans,octa-cis-decaprenol + 2 UDP + 2 H(+). The protein operates within cell wall biogenesis; cell wall polysaccharide biosynthesis. In terms of biological role, involved in the biosynthesis of the arabinogalactan (AG) region of the mycolylarabinogalactan-peptidoglycan (mAGP) complex, an essential component of the mycobacterial cell wall. Catalyzes the transfer of the first two galactofuranosyl (Galf) units from UDP-galactofuranose (UDP-Galf) onto the rhamnosyl-GlcNAc-diphospho-decaprenol (Rha-GlcNAc-PP-C50) acceptor, yielding galactofuranosyl-galactofuranosyl-rhamnosyl-GlcNAc-diphospho-decaprenol (Galf-Galf-Rha-GlcNAc-PP-C50). Thus, GlfT1 is the initiator of galactan synthesis, while GlfT2 continues with the subsequent polymerization events. The sequence is that of Galactofuranosyltransferase GlfT1 from Mycobacterium tuberculosis (strain CDC 1551 / Oshkosh).